Here is a 153-residue protein sequence, read N- to C-terminus: UPF0756 membrane protein Pjdr2_2290 (153 aa).

Helical transmembrane passes span 6 to 26, 50 to 70, 75 to 95, 111 to 131, and 132 to 152; these read LILVGLIVIGLIGRSPIIATA, LELGLLFLTLSVLVPFASGKV, LIAAFNTWPGWLALIGGAVAA, MVVGLVIGSIFGIIFLRGIPV, and GPLMAAGITAILYKLFKLMSG.

The protein belongs to the UPF0756 family.

The protein localises to the cell membrane. This is UPF0756 membrane protein Pjdr2_2290 from Paenibacillus sp. (strain JDR-2).